A 498-amino-acid polypeptide reads, in one-letter code: Glycerol kinase (498 aa).

Residue Thr-12 coordinates ADP. Residues Thr-12, Thr-13, and Ser-14 each contribute to the ATP site. Sn-glycerol 3-phosphate is bound at residue Thr-12. ADP is bound at residue Arg-16. Sn-glycerol 3-phosphate-binding residues include Arg-82, Glu-83, and Tyr-134. Arg-82, Glu-83, and Tyr-134 together coordinate glycerol. His-230 is modified (phosphohistidine; by HPr). Asp-244 contacts sn-glycerol 3-phosphate. The glycerol site is built by Asp-244 and Gln-245. Residues Thr-266 and Gly-309 each contribute to the ADP site. ATP-binding residues include Thr-266, Gly-309, Gln-313, and Gly-410. Residues Gly-410 and Asn-414 each coordinate ADP.

Belongs to the FGGY kinase family. Homotetramer and homodimer (in equilibrium). Post-translationally, the phosphoenolpyruvate-dependent sugar phosphotransferase system (PTS), including enzyme I, and histidine-containing protein (HPr) are required for the phosphorylation, which leads to the activation of the enzyme.

It catalyses the reaction glycerol + ATP = sn-glycerol 3-phosphate + ADP + H(+). It participates in polyol metabolism; glycerol degradation via glycerol kinase pathway; sn-glycerol 3-phosphate from glycerol: step 1/1. Activated by phosphorylation and inhibited by fructose 1,6-bisphosphate (FBP). Functionally, key enzyme in the regulation of glycerol uptake and metabolism. Catalyzes the phosphorylation of glycerol to yield sn-glycerol 3-phosphate. The polypeptide is Glycerol kinase (Staphylococcus aureus (strain Mu50 / ATCC 700699)).